Consider the following 257-residue polypeptide: High-affinity copper transporter ctrC (257 aa).

The next 2 membrane-spanning stretches (helical) occupy residues 79–99 (RGMFAGSCIGVICLVICLEFL) and 202–222 (YFNGYIIICIFIGAFLGSFIF).

The protein belongs to the copper transporter (Ctr) (TC 1.A.56) family. SLC31A subfamily.

It is found in the cell membrane. The enzyme catalyses Cu(2+)(in) = Cu(2+)(out). Its function is as follows. High-affinity copper transporter of plasma membrane that mediates copper uptake under low copper conditions. The mechanism driving the transmembrane transport of copper has still to be determined. Acts as a potential virulence factor. The sequence is that of High-affinity copper transporter ctrC from Aspergillus fumigatus (strain ATCC MYA-4609 / CBS 101355 / FGSC A1100 / Af293) (Neosartorya fumigata).